A 239-amino-acid chain; its full sequence is 7-cyano-7-deazaguanine synthase (239 aa).

13-23 (FSGGQDSTTCL) serves as a coordination point for ATP. Residues cysteine 201, cysteine 216, cysteine 219, and cysteine 222 each coordinate Zn(2+).

It belongs to the QueC family. Zn(2+) serves as cofactor.

The catalysed reaction is 7-carboxy-7-deazaguanine + NH4(+) + ATP = 7-cyano-7-deazaguanine + ADP + phosphate + H2O + H(+). It functions in the pathway purine metabolism; 7-cyano-7-deazaguanine biosynthesis. Catalyzes the ATP-dependent conversion of 7-carboxy-7-deazaguanine (CDG) to 7-cyano-7-deazaguanine (preQ(0)). This Bradyrhizobium sp. (strain BTAi1 / ATCC BAA-1182) protein is 7-cyano-7-deazaguanine synthase.